Reading from the N-terminus, the 325-residue chain is Cln5-like protein 2 (325 aa).

A signal peptide spans 1–19 (MNKLIFIIICLGIVDKTIS). N-linked (GlcNAc...) asparagine glycosylation is found at asparagine 88, asparagine 117, asparagine 133, asparagine 163, asparagine 182, asparagine 189, asparagine 238, and asparagine 262.

The protein belongs to the CLN5 family.

This chain is Cln5-like protein 2 (cln5lb), found in Dictyostelium discoideum (Social amoeba).